Here is a 387-residue protein sequence, read N- to C-terminus: Xylose isomerase (387 aa).

Active-site residues include histidine 53 and aspartate 56. Mg(2+) contacts are provided by glutamate 180, glutamate 216, histidine 219, aspartate 244, aspartate 254, aspartate 256, and aspartate 286.

It belongs to the xylose isomerase family. In terms of assembly, homotetramer. It depends on Mg(2+) as a cofactor.

The protein localises to the cytoplasm. It catalyses the reaction alpha-D-xylose = alpha-D-xylulofuranose. The protein is Xylose isomerase (xylA) of Thermus thermophilus (strain ATCC 27634 / DSM 579 / HB8).